Here is a 364-residue protein sequence, read N- to C-terminus: 4-hydroxythreonine-4-phosphate dehydrogenase (364 aa).

Positions 148 and 149 each coordinate substrate. A divalent metal cation is bound by residues His177, His216, and His301. Substrate-binding residues include Lys309, Asn318, and Arg327.

This sequence belongs to the PdxA family. Homodimer. Zn(2+) is required as a cofactor. Mg(2+) serves as cofactor. It depends on Co(2+) as a cofactor.

It is found in the cytoplasm. The enzyme catalyses 4-(phosphooxy)-L-threonine + NAD(+) = 3-amino-2-oxopropyl phosphate + CO2 + NADH. It functions in the pathway cofactor biosynthesis; pyridoxine 5'-phosphate biosynthesis; pyridoxine 5'-phosphate from D-erythrose 4-phosphate: step 4/5. Catalyzes the NAD(P)-dependent oxidation of 4-(phosphooxy)-L-threonine (HTP) into 2-amino-3-oxo-4-(phosphooxy)butyric acid which spontaneously decarboxylates to form 3-amino-2-oxopropyl phosphate (AHAP). This chain is 4-hydroxythreonine-4-phosphate dehydrogenase, found in Campylobacter jejuni subsp. jejuni serotype O:2 (strain ATCC 700819 / NCTC 11168).